A 252-amino-acid polypeptide reads, in one-letter code: MNNFAKRIIPCLDVNNGRVVKGVNFVNLIDAGDPVEVAKIYNDSGADELCFLDITASFENRDTIVEVVRNVASELFIPLTVGGGIRKIDDISRLLEAGCDKVSINSAAIKNPNFIDEAAKKFGSQCIVVAIDAKKTDQGYHVFINGGRVDTKIDVFSWSKEVENRGCGEILLTSMDRDGTKSGFDNYLTGKVSKSLGIPVIASGGAGCMEHIRDTFLAGADAALAASIFHFGEIKIDDLKRYLRTQNIEVRL.

Active-site residues include D13 and D132.

This sequence belongs to the HisA/HisF family. As to quaternary structure, heterodimer of HisH and HisF.

The protein localises to the cytoplasm. The catalysed reaction is 5-[(5-phospho-1-deoxy-D-ribulos-1-ylimino)methylamino]-1-(5-phospho-beta-D-ribosyl)imidazole-4-carboxamide + L-glutamine = D-erythro-1-(imidazol-4-yl)glycerol 3-phosphate + 5-amino-1-(5-phospho-beta-D-ribosyl)imidazole-4-carboxamide + L-glutamate + H(+). Its pathway is amino-acid biosynthesis; L-histidine biosynthesis; L-histidine from 5-phospho-alpha-D-ribose 1-diphosphate: step 5/9. IGPS catalyzes the conversion of PRFAR and glutamine to IGP, AICAR and glutamate. The HisF subunit catalyzes the cyclization activity that produces IGP and AICAR from PRFAR using the ammonia provided by the HisH subunit. In Campylobacter hominis (strain ATCC BAA-381 / DSM 21671 / CCUG 45161 / LMG 19568 / NCTC 13146 / CH001A), this protein is Imidazole glycerol phosphate synthase subunit HisF.